A 177-amino-acid chain; its full sequence is Adenine phosphoribosyltransferase (177 aa).

The protein belongs to the purine/pyrimidine phosphoribosyltransferase family. As to quaternary structure, homodimer.

It localises to the cytoplasm. It catalyses the reaction AMP + diphosphate = 5-phospho-alpha-D-ribose 1-diphosphate + adenine. It functions in the pathway purine metabolism; AMP biosynthesis via salvage pathway; AMP from adenine: step 1/1. Catalyzes a salvage reaction resulting in the formation of AMP, that is energically less costly than de novo synthesis. The protein is Adenine phosphoribosyltransferase of Cutibacterium acnes (strain DSM 16379 / KPA171202) (Propionibacterium acnes).